A 522-amino-acid polypeptide reads, in one-letter code: Zinc finger and BTB domain-containing protein 18 (522 aa).

Residues 24–91 (CDCTVLVGDA…MYEGKLQFKD (68 aa)) enclose the BTB domain. The segment covering 121–143 (ATTEADSTKKEEDASSCSDKVES) has biased composition (basic and acidic residues). The tract at residues 121–166 (ATTEADSTKKEEDASSCSDKVESLSDGSSHMAGDLPSDEDEGEDDK) is disordered. Ser157 bears the Phosphoserine mark. Lys273 is covalently cross-linked (Glycyl lysine isopeptide (Lys-Gly) (interchain with G-Cter in SUMO2)). Residues 310–427 (EPAHLAPLRE…TFSCMYTLKR (118 aa)) are interaction with DNMT3A. 4 C2H2-type zinc fingers span residues 370–392 (FMCP…LSTH), 410–432 (PTCS…ERTH), 438–460 (YTCT…AVVH), and 466–489 (HACK…RKFH). Residues Ser516 and Ser517 each carry the phosphoserine modification.

It belongs to the krueppel C2H2-type zinc-finger protein family. ZBTB18 subfamily. In terms of assembly, interacts with DNMT3A.

The protein localises to the nucleus. Its function is as follows. Transcriptional repressor that plays a role in various developmental processes such as myogenesis and brain development. Specifically binds the consensus DNA sequence 5'-[AC]ACATCTG[GT][AC]-3' which contains the E box core, and acts by recruiting chromatin remodeling multiprotein complexes. Plays a key role in myogenesis by directly repressing the expression of ID2 and ID3, 2 inhibitors of skeletal myogenesis. Also involved in controlling cell division of progenitor cells and regulating the survival of postmitotic cortical neurons. May also play a role in the organization of chromosomes in the nucleus. In Rattus norvegicus (Rat), this protein is Zinc finger and BTB domain-containing protein 18 (Zbtb18).